The following is a 200-amino-acid chain: Probable molybdenum cofactor guanylyltransferase (200 aa).

GTP is bound by residues 8 to 10 (LAG), K20, D66, and D97. D97 contacts Mg(2+).

This sequence belongs to the MobA family. It depends on Mg(2+) as a cofactor.

It localises to the cytoplasm. The enzyme catalyses Mo-molybdopterin + GTP + H(+) = Mo-molybdopterin guanine dinucleotide + diphosphate. In terms of biological role, transfers a GMP moiety from GTP to Mo-molybdopterin (Mo-MPT) cofactor (Moco or molybdenum cofactor) to form Mo-molybdopterin guanine dinucleotide (Mo-MGD) cofactor. This is Probable molybdenum cofactor guanylyltransferase from Bacillus velezensis (strain DSM 23117 / BGSC 10A6 / LMG 26770 / FZB42) (Bacillus amyloliquefaciens subsp. plantarum).